Consider the following 188-residue polypeptide: UPF0157 protein VC_A0354 (188 aa).

Belongs to the UPF0157 (GrpB) family.

The polypeptide is UPF0157 protein VC_A0354 (Vibrio cholerae serotype O1 (strain ATCC 39315 / El Tor Inaba N16961)).